Consider the following 72-residue polypeptide: Translation initiation factor IF-1 (72 aa).

Residues 1–72 (MAKDDVIEVE…TRGRITYRFK (72 aa)) enclose the S1-like domain.

It belongs to the IF-1 family. In terms of assembly, component of the 30S ribosomal translation pre-initiation complex which assembles on the 30S ribosome in the order IF-2 and IF-3, IF-1 and N-formylmethionyl-tRNA(fMet); mRNA recruitment can occur at any time during PIC assembly.

The protein localises to the cytoplasm. In terms of biological role, one of the essential components for the initiation of protein synthesis. Stabilizes the binding of IF-2 and IF-3 on the 30S subunit to which N-formylmethionyl-tRNA(fMet) subsequently binds. Helps modulate mRNA selection, yielding the 30S pre-initiation complex (PIC). Upon addition of the 50S ribosomal subunit IF-1, IF-2 and IF-3 are released leaving the mature 70S translation initiation complex. This chain is Translation initiation factor IF-1, found in Streptococcus pneumoniae serotype 2 (strain D39 / NCTC 7466).